The chain runs to 193 residues: MSIMIIGLTGGIASGKSTVSKYLAEKGFKVYDADKIAKDISEKKSVQEEIISTFGNKILDKNGNIDRKKLKEIVFENKEKLEKLNGIIHPKVINFYKELKEKKTDKVIIFDVPLLFESGIDKFCDKILVVISDYEVQLNRIIERDKINRELAEKIIKSQLSNEERIKKADVVIENNSNLEDLFKKVERFCETI.

The DPCK domain occupies 5–193; the sequence is IIGLTGGIAS…KKVERFCETI (189 aa). 13 to 18 is a binding site for ATP; sequence ASGKST.

The protein belongs to the CoaE family.

Its subcellular location is the cytoplasm. The enzyme catalyses 3'-dephospho-CoA + ATP = ADP + CoA + H(+). The protein operates within cofactor biosynthesis; coenzyme A biosynthesis; CoA from (R)-pantothenate: step 5/5. Catalyzes the phosphorylation of the 3'-hydroxyl group of dephosphocoenzyme A to form coenzyme A. In Fusobacterium nucleatum subsp. nucleatum (strain ATCC 25586 / DSM 15643 / BCRC 10681 / CIP 101130 / JCM 8532 / KCTC 2640 / LMG 13131 / VPI 4355), this protein is Dephospho-CoA kinase.